The following is a 351-amino-acid chain: Prostaglandin reductase 2 (351 aa).

Position 99 to 100 (99 to 100 (FY)) interacts with substrate. Residues 165-168 (GACG), Lys-192, Tyr-208, Asn-231, 253-259 (CGQISQY), 287-289 (FLV), and Asn-337 contribute to the NADP(+) site. 288–290 (LVL) contacts substrate.

The protein belongs to the NADP-dependent oxidoreductase L4BD family. Monomer. In terms of tissue distribution, widely expressed.

It localises to the cytoplasm. It carries out the reaction 13,14-dihydro-15-oxo-prostaglandin E2 + NAD(+) = 15-oxoprostaglandin E2 + NADH + H(+). The catalysed reaction is 13,14-dihydro-15-oxo-prostaglandin E2 + NADP(+) = 15-oxoprostaglandin E2 + NADPH + H(+). It catalyses the reaction 13,14-dihydro-15-oxo-PGF2alpha + NADP(+) = 15-oxoprostaglandin F2alpha + NADPH + H(+). The enzyme catalyses 13,14-dihydro-15-oxo-prostaglandin E1 + NADP(+) = 15-oxoprostaglandin E1 + NADPH + H(+). It carries out the reaction 13,14-dihydro-15-oxo-prostaglandin F1alpha + NADP(+) = 15-oxoprostaglandin F1alpha + NADPH + H(+). Functions as 15-oxo-prostaglandin 13-reductase and acts on 15-keto-PGE1, 15-keto-PGE2, 15-keto-PGE1-alpha and 15-keto-PGE2-alpha with highest activity towards 15-keto-PGE2. Overexpression represses transcriptional activity of PPARG and inhibits adipocyte differentiation. The protein is Prostaglandin reductase 2 of Homo sapiens (Human).